A 340-amino-acid chain; its full sequence is MEF2 transcription factor homolog (340 aa).

In terms of domain architecture, MADS-box spans 1-61 (MGRKKIQITR…NKLFQYASTD (61 aa)). Disordered stretches follow at residues 90 to 112 (RKEG…TSPV), 193 to 217 (NQRN…LDFP), 258 to 283 (LQQR…NGTS), and 312 to 340 (PNTY…QQLT). Over residues 200-211 (SSTSVAPSSSSS) the composition is skewed to low complexity. The segment covering 258 to 268 (LQQRPVSQPAP) has biased composition (polar residues). Residues 269 to 283 (SISNSSTNGISNGTS) show a composition bias toward low complexity. Residues 318–332 (MEPHSPPEKRPRITT) are compositionally biased toward basic and acidic residues.

It belongs to the MEF2 family. In terms of assembly, interacts with histone deacetylase hda-4 isoform b.

It is found in the nucleus. Transcription regulator. Binds specifically to the MEF2 element, 5'-[TC]TA[AT][AT][AT][AT]TA[AG]-3' in the regulatory elements of target genes, such as chemoreceptors str-1 and srh-234. Involved in transduction of sensory signals, together with egl-4, kin-29 and hda-4; binding to histone deacetylase hda-4 enables negative modulation of chemoreceptor gene expression in chemosensory neurons. In response to starvation, negatively modulates expression of chemoreceptor srh-234 in ADL sensory neurons, acting in concert with basic helix-loop-helix (bHLH) transcription factors. Plays a role in regulating muscle sensitivity to acetylcholine (ACh) and the magnitude of presynaptic ACh release via a retrograde signal, perhaps by indirectly decreasing Ras-related protein Rab-3 activity. In Caenorhabditis elegans, this protein is MEF2 transcription factor homolog.